Here is a 293-residue protein sequence, read N- to C-terminus: NAD kinase (293 aa).

Residue aspartate 72 is the Proton acceptor of the active site. Residues 72–73 (DG), 146–147 (ND), arginine 157, lysine 174, aspartate 176, 187–192 (TAYALS), and glutamine 247 each bind NAD(+).

This sequence belongs to the NAD kinase family. A divalent metal cation is required as a cofactor.

The protein localises to the cytoplasm. It carries out the reaction NAD(+) + ATP = ADP + NADP(+) + H(+). Involved in the regulation of the intracellular balance of NAD and NADP, and is a key enzyme in the biosynthesis of NADP. Catalyzes specifically the phosphorylation on 2'-hydroxyl of the adenosine moiety of NAD to yield NADP. This is NAD kinase from Marinomonas sp. (strain MWYL1).